Consider the following 765-residue polypeptide: MLSELGFIRTIGEDEDVQVEPETDSEDEEEEGPIVLGRKQKALQKNRSADFNPDFVFTEKEGMYDGSWAMADVLSQLKKKRAATTLDEKIEKVRKKRKTEDKEAKSGKSEKEKEAKEGSEPEEEEDLERKDVEASEDEESETDYSSADENILTKADTLKIKERKKKKKKGQEAGGFFEDASQYDENLSFQDMNLSRPLLKAITAMGFKQPTPIQKACIPVGLLGKDICACAATGTGKTAAFALPVLERLIYKPRQAPVTRVLVLVPTRELGIQVHSVTKQLAQFCSITTCLAVGGLDVKSQEAALRAAPDILIATPGRLIDHLHNCPSFHLSSIEVLILDEADRMLDEYFEEQMKEIIRMCSHHRQTMLFSATMTDEVKDLASVSLKNPVRIFVNSNTDVAPFLRQEFIRIRPNREGDREAIVAALLMRTFTDHVMLFTQTKKQAHRMHILLGLMGLQVGELHGNLSQTQRLEALRRFKDEQIDILVATDVAARGLDIEGVKTVINFTMPNTIKHYVHRVGRTARAGRAGRSVSLVGEEERKMLKEIVKAAKAPVKARILPQDVILKFRDKIEKMEKDVYAVLQLEAEEKEMQKSEAQINTAQRLLEKGKEAPNPEPERSWFQTKEERKKEKIAKALQEFDLALRGKKKRKKFMKEAKKKGEMTAEERSQFEILKAQMFAERLAKRNRRAKRARAMPEEEPVRAPAKKQKQVKKSVFDEELTNTSKKALKQYRAGPSFEERKKLGLPHQRRGGNFKSKSRYKRRK.

The interval 1–48 is disordered; that stretch reads MLSELGFIRTIGEDEDVQVEPETDSEDEEEEGPIVLGRKQKALQKNRS. The span at 13-32 shows a compositional bias: acidic residues; the sequence is EDEDVQVEPETDSEDEEEEG. Residues S25 and S48 each carry the phosphoserine modification. Positions 55 to 57 match the Required for interaction with the PEBOW complex motif; the sequence is FVF. The tract at residues 88 to 148 is disordered; sequence EKIEKVRKKR…ESETDYSSAD (61 aa). The segment covering 98 to 119 has biased composition (basic and acidic residues); it reads KTEDKEAKSGKSEKEKEAKEGS. Residues S135 and S146 each carry the phosphoserine modification. Residues 164–169 carry the Nuclear localization signal motif; it reads KKKKKK. Positions 187 to 215 match the Q motif motif; that stretch reads LSFQDMNLSRPLLKAITAMGFKQPTPIQK. One can recognise a Helicase ATP-binding domain in the interval 218-392; it reads IPVGLLGKDI…SVSLKNPVRI (175 aa). ATP is bound at residue 231–238; sequence AATGTGKT. Positions 340–343 match the DEAD box motif; the sequence is DEAD. The 147-residue stretch at 426–572 folds into the Helicase C-terminal domain; that stretch reads LLMRTFTDHV…DVILKFRDKI (147 aa). 2 stretches are compositionally biased toward basic residues: residues 685-694 and 744-765; these read KRNRRAKRAR and LGLP…KRRK. The tract at residues 685–765 is disordered; that stretch reads KRNRRAKRAR…KSKSRYKRRK (81 aa).

Belongs to the DEAD box helicase family. DDX27/DRS1 subfamily. In terms of assembly, associates with PeBoW complex, composed of BOP1, PES1 and WDR12. Interacts directly with BOP1 and PES1.

Its subcellular location is the nucleus. The protein resides in the nucleolus. It is found in the chromosome. The catalysed reaction is ATP + H2O = ADP + phosphate + H(+). In terms of biological role, probable ATP-dependent RNA helicase. Component of the nucleolar ribosomal RNA (rRNA) processing machinery that regulates 3' end formation of ribosomal 47S rRNA. The protein is Probable ATP-dependent RNA helicase DDX27 (DDX27) of Bos taurus (Bovine).